The primary structure comprises 301 residues: MPIIIDKDLPARKVLQEENIFVMTKERAETQDIRALKIAILNLMPTKQETEAQLLRLIGNTPLQLDVHLLHMESHLSRNVAQEHLTSFYKTFRDIENEKFDGLIITGAPVETLSFEEVDYWEELKRIMEYSKTNVTSTLHICWGAQAGLYHHYGVQKYPLKEKMFGVFEHEVREQHVKLLQGFDELFFAPHSRHTEVRENDIRGVKELTLLANSEEAGVHLVIGPEGRQVFALGHSEYSCDTLKQEYERDRQKGLNIDVPKNYFKHDNPNEKPLVRWRSHGNLLFSNWLNYYVYQETPYVL.

The active-site Acyl-thioester intermediate is Cys-142. Lys-163 and Ser-192 together coordinate substrate. His-235 (proton acceptor) is an active-site residue. Residue Glu-237 is part of the active site. Arg-249 is a binding site for substrate.

It belongs to the MetA family.

It is found in the cytoplasm. It carries out the reaction L-homoserine + acetyl-CoA = O-acetyl-L-homoserine + CoA. The protein operates within amino-acid biosynthesis; L-methionine biosynthesis via de novo pathway; O-acetyl-L-homoserine from L-homoserine: step 1/1. In terms of biological role, transfers an acetyl group from acetyl-CoA to L-homoserine, forming acetyl-L-homoserine. This Bacillus cereus (strain ZK / E33L) protein is Homoserine O-acetyltransferase.